Here is a 285-residue protein sequence, read N- to C-terminus: Bifunctional protein FolD (285 aa).

Residues 165 to 167 and isoleucine 232 contribute to the NADP(+) site; that span reads GAS.

This sequence belongs to the tetrahydrofolate dehydrogenase/cyclohydrolase family. As to quaternary structure, homodimer.

The catalysed reaction is (6R)-5,10-methylene-5,6,7,8-tetrahydrofolate + NADP(+) = (6R)-5,10-methenyltetrahydrofolate + NADPH. The enzyme catalyses (6R)-5,10-methenyltetrahydrofolate + H2O = (6R)-10-formyltetrahydrofolate + H(+). It functions in the pathway one-carbon metabolism; tetrahydrofolate interconversion. In terms of biological role, catalyzes the oxidation of 5,10-methylenetetrahydrofolate to 5,10-methenyltetrahydrofolate and then the hydrolysis of 5,10-methenyltetrahydrofolate to 10-formyltetrahydrofolate. This chain is Bifunctional protein FolD, found in Sulfurihydrogenibium sp. (strain YO3AOP1).